The primary structure comprises 145 residues: MELVQVLKRGLQQITGHGGLRGYLRVFFRTNDAKVGTLVGEDKYGNKYYEDNKQFFGRHRWVVYTTEMNGKNTFWDVDGSMVPPEWHRWLHSMTDDPPTTKPLTARKFIWTNHKFNVTGTPEQYVPYSTTRKKIQEWIPPSTPYK.

The residue at position 1 (methionine 1) is an N-acetylmethionine.

This sequence belongs to the complex I NDUFA12 subunit family. Complex I is composed of 45 different subunits.

The protein resides in the mitochondrion inner membrane. Accessory subunit of the mitochondrial membrane respiratory chain NADH dehydrogenase (Complex I), that is believed not to be involved in catalysis. Complex I functions in the transfer of electrons from NADH to the respiratory chain. The immediate electron acceptor for the enzyme is believed to be ubiquinone. The chain is NADH dehydrogenase [ubiquinone] 1 alpha subcomplex subunit 12 (NDUFA12) from Homo sapiens (Human).